The primary structure comprises 105 residues: Serine protease inhibitor Kazal-type 6 (105 aa).

The signal sequence occupies residues 1 to 23 (MKVAGVFLLLSLALLCFFSGAFS). The residue at position 24 (Gln24) is a Pyrrolidone carboxylic acid. Residues 49-105 (RLFQINCGEFRDPKVFCTRESDPLCGSDGQTYGNKCAFCKALEKSSGKINLKHRGKC) form the Kazal-like domain. 3 cysteine pairs are disulfide-bonded: Cys55–Cys87, Cys65–Cys84, and Cys73–Cys105.

In terms of tissue distribution, expressed in the upper epidermis and in skin appendages.

The protein resides in the secreted. Functionally, serine protease inhibitor selective for kallikreins. Efficiently inhibits KLK5 and human KLK2, KLK4, KLK5, KLK6, KLK7, KLK12, KLK13 and KLK14. Doesn't inhibit human KLK1 and KLK8. This Mus musculus (Mouse) protein is Serine protease inhibitor Kazal-type 6 (Spink6).